Reading from the N-terminus, the 119-residue chain is Holo-[acyl-carrier-protein] synthase (119 aa).

Positions 8 and 58 each coordinate Mg(2+).

The protein belongs to the P-Pant transferase superfamily. AcpS family. Mg(2+) is required as a cofactor.

Its subcellular location is the cytoplasm. It catalyses the reaction apo-[ACP] + CoA = holo-[ACP] + adenosine 3',5'-bisphosphate + H(+). Its function is as follows. Transfers the 4'-phosphopantetheine moiety from coenzyme A to a Ser of acyl-carrier-protein. This is Holo-[acyl-carrier-protein] synthase from Bacillus mycoides (strain KBAB4) (Bacillus weihenstephanensis).